A 251-amino-acid chain; its full sequence is Protein phosphatase 1 regulatory subunit 35 (251 aa).

Disordered stretches follow at residues 58-99 and 180-235; these read LITV…QQTH and PALA…VPRP. A compositionally biased stretch (basic and acidic residues) spans 76–99; sequence PNKDEHGVETDREQSRECDGQQTH.

Belongs to the PPP1R35 family.

The protein resides in the cytoplasm. Its subcellular location is the cytoskeleton. It is found in the microtubule organizing center. It localises to the centrosome. The protein localises to the centriole. Functionally, during centriole duplication, may play a role in the centriole elongation by promoting the recruitment of the microtubule-binding elongation machinery, leading to the centriole to centrosome conversion. In addition may play a role in the primary cilia assembly. This chain is Protein phosphatase 1 regulatory subunit 35, found in Danio rerio (Zebrafish).